The sequence spans 555 residues: Energy-dependent translational throttle protein EttA (555 aa).

ABC transporter domains follow at residues Y6 to A259 and L324 to Y550. G39–S46 provides a ligand contact to ATP. The interval S95 to N139 is arm. Residues G242–K322 form a ptIM region. ATP is bound at residue G356–S363.

Belongs to the ABC transporter superfamily. ABCF family. Translational throttle EttA subfamily. Monomer. Probably contacts ribosomal proteins L1, L5, L33 and S7, the 16S and 23S rRNA and the P-site containing tRNA(fMet).

The protein resides in the cytoplasm. The enzyme catalyses ATP + H2O = ADP + phosphate + H(+). In terms of biological role, a translation factor that gates the progression of the 70S ribosomal initiation complex (IC, containing tRNA(fMet) in the P-site) into the translation elongation cycle by using a mechanism sensitive to the ATP/ADP ratio. Binds to the 70S ribosome E-site where it modulates the state of the translating ribosome during subunit translocation. ATP hydrolysis probably frees it from the ribosome, which can enter the elongation phase. This Escherichia coli O157:H7 protein is Energy-dependent translational throttle protein EttA.